The primary structure comprises 212 residues: Thiamine-phosphate synthase (212 aa).

4-amino-2-methyl-5-(diphosphooxymethyl)pyrimidine contacts are provided by residues 43-47 (QYRNK) and Asn75. Residues Asp76 and Asp95 each contribute to the Mg(2+) site. Ser114 is a 4-amino-2-methyl-5-(diphosphooxymethyl)pyrimidine binding site. 141-143 (SMT) contributes to the 2-[(2R,5Z)-2-carboxy-4-methylthiazol-5(2H)-ylidene]ethyl phosphate binding site. Residue Lys144 participates in 4-amino-2-methyl-5-(diphosphooxymethyl)pyrimidine binding. Gly171 is a binding site for 2-[(2R,5Z)-2-carboxy-4-methylthiazol-5(2H)-ylidene]ethyl phosphate.

The protein belongs to the thiamine-phosphate synthase family. Mg(2+) is required as a cofactor.

It carries out the reaction 2-[(2R,5Z)-2-carboxy-4-methylthiazol-5(2H)-ylidene]ethyl phosphate + 4-amino-2-methyl-5-(diphosphooxymethyl)pyrimidine + 2 H(+) = thiamine phosphate + CO2 + diphosphate. The catalysed reaction is 2-(2-carboxy-4-methylthiazol-5-yl)ethyl phosphate + 4-amino-2-methyl-5-(diphosphooxymethyl)pyrimidine + 2 H(+) = thiamine phosphate + CO2 + diphosphate. The enzyme catalyses 4-methyl-5-(2-phosphooxyethyl)-thiazole + 4-amino-2-methyl-5-(diphosphooxymethyl)pyrimidine + H(+) = thiamine phosphate + diphosphate. It participates in cofactor biosynthesis; thiamine diphosphate biosynthesis; thiamine phosphate from 4-amino-2-methyl-5-diphosphomethylpyrimidine and 4-methyl-5-(2-phosphoethyl)-thiazole: step 1/1. Functionally, condenses 4-methyl-5-(beta-hydroxyethyl)thiazole monophosphate (THZ-P) and 2-methyl-4-amino-5-hydroxymethyl pyrimidine pyrophosphate (HMP-PP) to form thiamine monophosphate (TMP). The sequence is that of Thiamine-phosphate synthase from Nitrosomonas eutropha (strain DSM 101675 / C91 / Nm57).